Here is a 496-residue protein sequence, read N- to C-terminus: Maturase K (496 aa).

It belongs to the intron maturase 2 family. MatK subfamily.

It localises to the plastid. It is found in the chloroplast. In terms of biological role, usually encoded in the trnK tRNA gene intron. Probably assists in splicing its own and other chloroplast group II introns. The protein is Maturase K of Paeonia cambessedesii (Majorcan peony).